A 448-amino-acid polypeptide reads, in one-letter code: Phosphoglucosamine mutase (448 aa).

Catalysis depends on Ser-104, which acts as the Phosphoserine intermediate. 4 residues coordinate Mg(2+): Ser-104, Asp-245, Asp-247, and Asp-249. At Ser-104 the chain carries Phosphoserine.

It belongs to the phosphohexose mutase family. Mg(2+) serves as cofactor. In terms of processing, activated by phosphorylation.

It carries out the reaction alpha-D-glucosamine 1-phosphate = D-glucosamine 6-phosphate. Catalyzes the conversion of glucosamine-6-phosphate to glucosamine-1-phosphate. The protein is Phosphoglucosamine mutase of Caulobacter vibrioides (strain ATCC 19089 / CIP 103742 / CB 15) (Caulobacter crescentus).